A 157-amino-acid polypeptide reads, in one-letter code: Peptide methionine sulfoxide reductase MsrA (157 aa).

Cysteine 10 is a catalytic residue.

This sequence belongs to the MsrA Met sulfoxide reductase family.

It carries out the reaction L-methionyl-[protein] + [thioredoxin]-disulfide + H2O = L-methionyl-(S)-S-oxide-[protein] + [thioredoxin]-dithiol. The catalysed reaction is [thioredoxin]-disulfide + L-methionine + H2O = L-methionine (S)-S-oxide + [thioredoxin]-dithiol. Its function is as follows. Has an important function as a repair enzyme for proteins that have been inactivated by oxidation. Catalyzes the reversible oxidation-reduction of methionine sulfoxide in proteins to methionine. The sequence is that of Peptide methionine sulfoxide reductase MsrA from Clostridium botulinum (strain Loch Maree / Type A3).